Consider the following 711-residue polypeptide: Zinc finger CCCH domain-containing protein 32 (711 aa).

Positions 1 to 21 are enriched in low complexity; the sequence is MEADGAAAAAAAGEASTEAGA. The disordered stretch occupies residues 1–23; it reads MEADGAAAAAAAGEASTEAGARP. 3 C3H1-type zinc fingers span residues 31–60, 62–88, and 112–139; these read LRRN…HSDN, RMNP…HPPI, and GKQL…HGPQ. Disordered regions lie at residues 221–246, 339–376, 405–561, and 573–701; these read KSEK…GDHP, RFNG…HSER, SSLA…EGPK, and AAWA…DDDD. Composition is skewed to basic and acidic residues over residues 364–376 and 413–427; these read SERS…HSER and RNGE…YRER. The span at 428–437 shows a compositional bias: basic residues; it reads AHGHRSHRDH. Composition is skewed to basic and acidic residues over residues 460 to 509 and 585 to 594; these read SPDR…RRSS and KQDKSAEVSH. Composition is skewed to acidic residues over residues 648–663 and 686–701; these read EDII…DADN and ENAY…DDDD.

This Oryza sativa subsp. japonica (Rice) protein is Zinc finger CCCH domain-containing protein 32.